We begin with the raw amino-acid sequence, 309 residues long: tRNA uridine(34) hydroxylase (309 aa).

The 95-residue stretch at Ser-130–Ser-224 folds into the Rhodanese domain. The Cysteine persulfide intermediate role is filled by Cys-184.

It belongs to the TrhO family.

It catalyses the reaction uridine(34) in tRNA + AH2 + O2 = 5-hydroxyuridine(34) in tRNA + A + H2O. Its function is as follows. Catalyzes oxygen-dependent 5-hydroxyuridine (ho5U) modification at position 34 in tRNAs. The sequence is that of tRNA uridine(34) hydroxylase from Rhizobium johnstonii (strain DSM 114642 / LMG 32736 / 3841) (Rhizobium leguminosarum bv. viciae).